The following is a 239-amino-acid chain: Probable transcriptional regulatory protein Pnuc_0618 (239 aa).

A disordered region spans residues 1-21; the sequence is MAGHSKWANIQHRKGRQDEKR.

This sequence belongs to the TACO1 family.

It is found in the cytoplasm. The protein is Probable transcriptional regulatory protein Pnuc_0618 of Polynucleobacter asymbioticus (strain DSM 18221 / CIP 109841 / QLW-P1DMWA-1) (Polynucleobacter necessarius subsp. asymbioticus).